Consider the following 335-residue polypeptide: Protein-arginine kinase (335 aa).

Positions 21-244 constitute a Phosphagen kinase C-terminal domain; that stretch reads IVMSSRIRLA…NQIIHEEKQI (224 aa). Residues 24-28, His82, Arg115, 166-170, and 197-202 contribute to the ATP site; these read SSRIR, RASVM, and RGIYGE.

It belongs to the ATP:guanido phosphotransferase family.

The enzyme catalyses L-arginyl-[protein] + ATP = N(omega)-phospho-L-arginyl-[protein] + ADP + H(+). Catalyzes the specific phosphorylation of arginine residues in proteins. This chain is Protein-arginine kinase, found in Staphylococcus aureus (strain USA300).